A 302-amino-acid chain; its full sequence is Sulfate adenylyltransferase subunit 2 (302 aa).

The protein belongs to the PAPS reductase family. CysD subfamily. In terms of assembly, heterodimer composed of CysD, the smaller subunit, and CysN.

It catalyses the reaction sulfate + ATP + H(+) = adenosine 5'-phosphosulfate + diphosphate. The protein operates within sulfur metabolism; hydrogen sulfide biosynthesis; sulfite from sulfate: step 1/3. Its function is as follows. With CysN forms the ATP sulfurylase (ATPS) that catalyzes the adenylation of sulfate producing adenosine 5'-phosphosulfate (APS) and diphosphate, the first enzymatic step in sulfur assimilation pathway. APS synthesis involves the formation of a high-energy phosphoric-sulfuric acid anhydride bond driven by GTP hydrolysis by CysN coupled to ATP hydrolysis by CysD. The chain is Sulfate adenylyltransferase subunit 2 from Escherichia coli O6:K15:H31 (strain 536 / UPEC).